A 110-amino-acid chain; its full sequence is Acylphosphatase (110 aa).

The 89-residue stretch at Arg-20–Pro-108 folds into the Acylphosphatase-like domain. Residues Arg-35 and Asn-53 contribute to the active site.

This sequence belongs to the acylphosphatase family.

The catalysed reaction is an acyl phosphate + H2O = a carboxylate + phosphate + H(+). The chain is Acylphosphatase (acyP) from Pyrobaculum calidifontis (strain DSM 21063 / JCM 11548 / VA1).